We begin with the raw amino-acid sequence, 132 residues long: Large ribosomal subunit protein uL24 (132 aa).

It belongs to the universal ribosomal protein uL24 family. As to quaternary structure, part of the 50S ribosomal subunit.

Functionally, one of two assembly initiator proteins, it binds directly to the 5'-end of the 23S rRNA, where it nucleates assembly of the 50S subunit. Located at the polypeptide exit tunnel on the outside of the subunit. The protein is Large ribosomal subunit protein uL24 of Aeropyrum pernix (strain ATCC 700893 / DSM 11879 / JCM 9820 / NBRC 100138 / K1).